The sequence spans 343 residues: Phenylalanine--tRNA ligase alpha subunit (343 aa).

Residue glutamate 268 participates in Mg(2+) binding.

It belongs to the class-II aminoacyl-tRNA synthetase family. Phe-tRNA synthetase alpha subunit type 1 subfamily. Tetramer of two alpha and two beta subunits. It depends on Mg(2+) as a cofactor.

It localises to the cytoplasm. The catalysed reaction is tRNA(Phe) + L-phenylalanine + ATP = L-phenylalanyl-tRNA(Phe) + AMP + diphosphate + H(+). This Cupriavidus necator (strain ATCC 17699 / DSM 428 / KCTC 22496 / NCIMB 10442 / H16 / Stanier 337) (Ralstonia eutropha) protein is Phenylalanine--tRNA ligase alpha subunit.